Consider the following 163-residue polypeptide: Xanthine-guanine phosphoribosyltransferase (163 aa).

5-phospho-alpha-D-ribose 1-diphosphate contacts are provided by residues 43–44 and 95–103; these read RG and DDLVDTGGT. Asp-96 lines the Mg(2+) pocket. Asp-99 and Ile-142 together coordinate guanine. Xanthine contacts are provided by Asp-99 and Ile-142. GMP is bound by residues 99-103 and 141-142; these read DTGGT and WI.

This sequence belongs to the purine/pyrimidine phosphoribosyltransferase family. XGPT subfamily. Homotetramer. Requires Mg(2+) as cofactor.

The protein localises to the cell inner membrane. The catalysed reaction is GMP + diphosphate = guanine + 5-phospho-alpha-D-ribose 1-diphosphate. It carries out the reaction XMP + diphosphate = xanthine + 5-phospho-alpha-D-ribose 1-diphosphate. It catalyses the reaction IMP + diphosphate = hypoxanthine + 5-phospho-alpha-D-ribose 1-diphosphate. It participates in purine metabolism; GMP biosynthesis via salvage pathway; GMP from guanine: step 1/1. The protein operates within purine metabolism; XMP biosynthesis via salvage pathway; XMP from xanthine: step 1/1. Functionally, purine salvage pathway enzyme that catalyzes the transfer of the ribosyl-5-phosphate group from 5-phospho-alpha-D-ribose 1-diphosphate (PRPP) to the N9 position of the 6-oxopurines guanine and xanthine to form the corresponding ribonucleotides GMP (guanosine 5'-monophosphate) and XMP (xanthosine 5'-monophosphate), with the release of PPi. To a lesser extent, also acts on hypoxanthine. The protein is Xanthine-guanine phosphoribosyltransferase of Nitratidesulfovibrio vulgaris (strain DP4) (Desulfovibrio vulgaris).